Here is a 305-residue protein sequence, read N- to C-terminus: Mycothiol acetyltransferase (305 aa).

N-acetyltransferase domains lie at 10 to 153 (DRLD…LVVP) and 156 to 305 (ISLR…YARA). Residue Glu38 participates in 1D-myo-inositol 2-(L-cysteinylamino)-2-deoxy-alpha-D-glucopyranoside binding. Position 82-84 (82-84 (LAV)) interacts with acetyl-CoA. 3 residues coordinate 1D-myo-inositol 2-(L-cysteinylamino)-2-deoxy-alpha-D-glucopyranoside: Glu183, Lys225, and Glu238. Acetyl-CoA-binding positions include 242–244 (VAI) and 249–255 (QGRGLGR). Residue Tyr276 participates in 1D-myo-inositol 2-(L-cysteinylamino)-2-deoxy-alpha-D-glucopyranoside binding. 281-286 (NESALH) lines the acetyl-CoA pocket.

It belongs to the acetyltransferase family. MshD subfamily. In terms of assembly, monomer.

It carries out the reaction 1D-myo-inositol 2-(L-cysteinylamino)-2-deoxy-alpha-D-glucopyranoside + acetyl-CoA = mycothiol + CoA + H(+). Its function is as follows. Catalyzes the transfer of acetyl from acetyl-CoA to desacetylmycothiol (Cys-GlcN-Ins) to form mycothiol. In Rhodococcus jostii (strain RHA1), this protein is Mycothiol acetyltransferase.